The chain runs to 257 residues: Acetylglutamate kinase (257 aa).

Substrate contacts are provided by residues 43-44 (GG), Arg65, and Asn157. Residues 180-185 (DVSGIL) and 208-210 (IIT) contribute to the ATP site.

This sequence belongs to the acetylglutamate kinase family. ArgB subfamily. As to quaternary structure, homodimer.

It localises to the cytoplasm. The enzyme catalyses N-acetyl-L-glutamate + ATP = N-acetyl-L-glutamyl 5-phosphate + ADP. It functions in the pathway amino-acid biosynthesis; L-arginine biosynthesis; N(2)-acetyl-L-ornithine from L-glutamate: step 2/4. Catalyzes the ATP-dependent phosphorylation of N-acetyl-L-glutamate. The protein is Acetylglutamate kinase of Salmonella agona (strain SL483).